The sequence spans 401 residues: Putative TRAP transporter large permease protein HI_0050 (401 aa).

11 consecutive transmembrane segments (helical) span residues 31-51, 70-90, 115-135, 144-164, 193-213, 217-237, 253-273, 290-310, 330-350, 353-373, and 375-395; these read FPLM…HGGI, LGYV…SAVA, GLIC…PMII, ITKL…GLWV, AFWP…GIFT, AGVV…GLTF, MVMF…VAQI, ILMF…DLIP, IAYF…TPPV, VLYV…KGIA, and FLFV…IVIV.

Belongs to the TRAP transporter large permease family.

Its subcellular location is the cell inner membrane. The chain is Putative TRAP transporter large permease protein HI_0050 from Haemophilus influenzae (strain ATCC 51907 / DSM 11121 / KW20 / Rd).